Here is a 142-residue protein sequence, read N- to C-terminus: Large ribosomal subunit protein uL13 (142 aa).

The protein belongs to the universal ribosomal protein uL13 family. In terms of assembly, part of the 50S ribosomal subunit.

In terms of biological role, this protein is one of the early assembly proteins of the 50S ribosomal subunit, although it is not seen to bind rRNA by itself. It is important during the early stages of 50S assembly. This chain is Large ribosomal subunit protein uL13, found in Francisella tularensis subsp. mediasiatica (strain FSC147).